We begin with the raw amino-acid sequence, 235 residues long: Casparian strip membrane protein 2 (235 aa).

Over 1-70 (MTSESATVIQ…RSGAEGFRRC (70 aa)) the chain is Cytoplasmic. The helical transmembrane segment at 71–91 (LAVIDFLLRVAAFGPTLAAAI) threads the bilayer. At 92-118 (STGTADERLSVFTNFFQFHARFDDFPA) the chain is on the extracellular side. The chain crosses the membrane as a helical span at residues 119–139 (FTFFLVANAVAAGYLVLSLPF). Residues 140 to 162 (SVVVILRPNKATGGVRLLLLLCD) lie on the Cytoplasmic side of the membrane. Residues 163-183 (VLIMALLTAAGAAAAAIVYVA) form a helical membrane-spanning segment. At 184-210 (HSGNRRANWVPICMQFHGFCQRTSGSV) the chain is on the extracellular side. Residues 211–231 (VATFLAVLVFIVLILMAACVI) traverse the membrane as a helical segment. Over 232–235 (RRSK) the chain is Cytoplasmic.

It belongs to the Casparian strip membrane proteins (CASP) family. In terms of assembly, homodimer and heterodimers.

It is found in the cell membrane. In terms of biological role, regulates membrane-cell wall junctions and localized cell wall deposition. Required for establishment of the Casparian strip membrane domain (CSD) and the subsequent formation of Casparian strips, a cell wall modification of the root endodermis that determines an apoplastic barrier between the intraorganismal apoplasm and the extraorganismal apoplasm and prevents lateral diffusion. This is Casparian strip membrane protein 2 from Sorghum bicolor (Sorghum).